Here is a 163-residue protein sequence, read N- to C-terminus: Odorant-binding protein 1a (163 aa).

A signal peptide spans 1 to 16 (MAKFLLLALTFGLAHA). Disulfide bonds link Cys-50-Cys-54 and Cys-69-Cys-161.

Belongs to the calycin superfamily. Lipocalin family. In terms of assembly, may form a heterodimer with OBP1B. Post-translationally, the N-terminus may be blocked. As to expression, expressed in nasal mucosa (at protein level). Specifically detected in septal and lateral nasal glands.

The protein resides in the secreted. Its function is as follows. Binds the chemical odorant 2-isobutyl-3-methoxypyrazine. The chain is Odorant-binding protein 1a from Mus musculus (Mouse).